Consider the following 194-residue polypeptide: Imidazoleglycerol-phosphate dehydratase (194 aa).

It belongs to the imidazoleglycerol-phosphate dehydratase family.

The protein resides in the cytoplasm. The catalysed reaction is D-erythro-1-(imidazol-4-yl)glycerol 3-phosphate = 3-(imidazol-4-yl)-2-oxopropyl phosphate + H2O. Its pathway is amino-acid biosynthesis; L-histidine biosynthesis; L-histidine from 5-phospho-alpha-D-ribose 1-diphosphate: step 6/9. This Lacticaseibacillus paracasei (strain ATCC 334 / BCRC 17002 / CCUG 31169 / CIP 107868 / KCTC 3260 / NRRL B-441) (Lactobacillus paracasei) protein is Imidazoleglycerol-phosphate dehydratase.